A 556-amino-acid polypeptide reads, in one-letter code: 2-succinyl-5-enolpyruvyl-6-hydroxy-3-cyclohexene-1-carboxylate synthase (556 aa).

It belongs to the TPP enzyme family. MenD subfamily. In terms of assembly, homodimer. The cofactor is Mg(2+). Mn(2+) serves as cofactor. Thiamine diphosphate is required as a cofactor.

The enzyme catalyses isochorismate + 2-oxoglutarate + H(+) = 5-enolpyruvoyl-6-hydroxy-2-succinyl-cyclohex-3-ene-1-carboxylate + CO2. The protein operates within quinol/quinone metabolism; 1,4-dihydroxy-2-naphthoate biosynthesis; 1,4-dihydroxy-2-naphthoate from chorismate: step 2/7. It participates in quinol/quinone metabolism; menaquinone biosynthesis. Functionally, catalyzes the thiamine diphosphate-dependent decarboxylation of 2-oxoglutarate and the subsequent addition of the resulting succinic semialdehyde-thiamine pyrophosphate anion to isochorismate to yield 2-succinyl-5-enolpyruvyl-6-hydroxy-3-cyclohexene-1-carboxylate (SEPHCHC). The chain is 2-succinyl-5-enolpyruvyl-6-hydroxy-3-cyclohexene-1-carboxylate synthase from Escherichia coli O8 (strain IAI1).